Reading from the N-terminus, the 352-residue chain is Biotin synthase (352 aa).

The Radical SAM core domain maps to 44 to 262 (NRVQVSTLLS…LAVARLLMPK (219 aa)). Positions 59, 63, and 66 each coordinate [4Fe-4S] cluster. Positions 103, 134, 194, and 266 each coordinate [2Fe-2S] cluster.

The protein belongs to the radical SAM superfamily. Biotin synthase family. In terms of assembly, homodimer. Requires [4Fe-4S] cluster as cofactor. [2Fe-2S] cluster is required as a cofactor.

It carries out the reaction (4R,5S)-dethiobiotin + (sulfur carrier)-SH + 2 reduced [2Fe-2S]-[ferredoxin] + 2 S-adenosyl-L-methionine = (sulfur carrier)-H + biotin + 2 5'-deoxyadenosine + 2 L-methionine + 2 oxidized [2Fe-2S]-[ferredoxin]. It functions in the pathway cofactor biosynthesis; biotin biosynthesis; biotin from 7,8-diaminononanoate: step 2/2. Functionally, catalyzes the conversion of dethiobiotin (DTB) to biotin by the insertion of a sulfur atom into dethiobiotin via a radical-based mechanism. The sequence is that of Biotin synthase from Pseudomonas putida (strain W619).